Here is a 244-residue protein sequence, read N- to C-terminus: 3-oxoacyl-[acyl-carrier-protein] reductase FabG (244 aa).

NADP(+) is bound by residues 12-15 (GASR) and Thr-37. Residues Gly-50 and Gly-53 each contribute to the Ca(2+) site. Residues 59-60 (NV) and Asn-86 contribute to the NADP(+) site. Residue Ser-138 participates in substrate binding. Residue Asn-145 participates in Ca(2+) binding. Tyr-151 functions as the Proton acceptor in the catalytic mechanism. NADP(+) contacts are provided by residues 151 to 155 (YAAAK) and Ile-184. Ca(2+)-binding residues include Glu-233 and Thr-234.

Belongs to the short-chain dehydrogenases/reductases (SDR) family. In terms of assembly, homotetramer.

The catalysed reaction is a (3R)-hydroxyacyl-[ACP] + NADP(+) = a 3-oxoacyl-[ACP] + NADPH + H(+). Its pathway is lipid metabolism; fatty acid biosynthesis. In terms of biological role, catalyzes the NADPH-dependent reduction of beta-ketoacyl-ACP substrates to beta-hydroxyacyl-ACP products, the first reductive step in the elongation cycle of fatty acid biosynthesis. The polypeptide is 3-oxoacyl-[acyl-carrier-protein] reductase FabG (fabG) (Salmonella typhi).